The chain runs to 346 residues: NADH-quinone oxidoreductase subunit H (346 aa).

8 helical membrane-spanning segments follow: residues 6–26 (ILFW…ACAY), 76–96 (IMYL…WSVV), 128–148 (ILFL…AGWA), 166–186 (ISYE…TGSL), 198–218 (LWNI…VAMF), 260–280 (ITMS…PFGI), 289–309 (LFGL…FVWV), and 324–344 (LGWK…SLYI).

Belongs to the complex I subunit 1 family. As to quaternary structure, NDH-1 is composed of 14 different subunits. Subunits NuoA, H, J, K, L, M, N constitute the membrane sector of the complex.

Its subcellular location is the cell inner membrane. It catalyses the reaction a quinone + NADH + 5 H(+)(in) = a quinol + NAD(+) + 4 H(+)(out). Functionally, NDH-1 shuttles electrons from NADH, via FMN and iron-sulfur (Fe-S) centers, to quinones in the respiratory chain. The immediate electron acceptor for the enzyme in this species is believed to be ubiquinone. Couples the redox reaction to proton translocation (for every two electrons transferred, four hydrogen ions are translocated across the cytoplasmic membrane), and thus conserves the redox energy in a proton gradient. This subunit may bind ubiquinone. This chain is NADH-quinone oxidoreductase subunit H, found in Leptospira borgpetersenii serovar Hardjo-bovis (strain JB197).